Here is a 108-residue protein sequence, read N- to C-terminus: Cyclin-dependent protein kinase inhibitor SMR13 (108 aa).

Functionally, probable cyclin-dependent protein kinase (CDK) inhibitor that functions as a repressor of mitosis in the endoreduplication cell cycle. This chain is Cyclin-dependent protein kinase inhibitor SMR13, found in Arabidopsis thaliana (Mouse-ear cress).